A 938-amino-acid polypeptide reads, in one-letter code: MAEAKTTRLNKVLREFNISLDRAVEYLTSKGYEIDARPTTKISGEIYEVLSDEFETDKSKKVASKEVGEERKKEKEELRKEIEEKRKADEEKKEEAVSSRAKLEGPKTVGKIDLDKKPGEKSKEKEAEAPKEKEKEKETPAKEPVKKAEESKPTEKPAEKVEEKEDKPKEEKKAEPKKEEAKPQEAKAEKTKSEEPKSEETKSEETTEGGESEEKESDRIETKYTKLNGPNFTGKKIDLSQFKKPVKKKEEKKEDDKKDKDRRKKRRRRISKDVKGGGGNNQRGGAKKGGRTRSKPITKEEPTEEEVQKQVRETLEKLQGKSSKGKGAKYRRQKRDEHRQRSADDLAQQESDDKILKVTEFVTVSEVATMMDVQVTQIISACMSLGMMVTMNQRLDAETLTIVAEEFDYEVEFTTADVEETVEEVEENPEDLVTRAPIVTVMGHVDHGKTSLLDYVRKENVIAGESGGITQHIGAYGVKLEGGQKIAFLDTPGHEAFTAMRARGAQVTDIAIIVIAADDDVMPQTKEAISHAQAAGVPIIFAINKSDLPTANPEKIKEKLAAMNLLVEDWGGKIQSHDISAKTGAGVKELLEKVLLEAEILELKANPKKLAKGTVVEAFLDKGRGYIATILVQAGTLKIGDYVLAGRNSGKIKAMHDERGHEVKEAGPSTPVSILGLDGAPQAGDTFKVMEDEREAKDIAARRTQLQREQNVRTQRHITLDEIGRRIALGDFKELNIILKGDVDGSVEALTDSFQKLSTEEIQVNIIHKGVGAITESDVLLASASDAVIIGFNVRPAGNARQVADKEEIDIRTYSIIYDAINDLKDAMEGMLSPELKEEITGTAEIRETFKISKIGTIAGCMVTSGTIYRSAGVRLIRDGVVVYTGELSSLKRFKDDVREVKKGYDCGMQVKNYNDIREGDVIEAFREVEVKKTLKSK.

Over residues 57–205 (DKSKKVASKE…PKSEETKSEE (149 aa)) the composition is skewed to basic and acidic residues. Positions 57 to 350 (DKSKKVASKE…RSADDLAQQE (294 aa)) are disordered. Residues 206 to 215 (TTEGGESEEK) are compositionally biased toward acidic residues. A compositionally biased stretch (basic and acidic residues) spans 248–259 (KKEEKKEDDKKD). Composition is skewed to basic residues over residues 260–270 (KDRRKKRRRRI) and 285–296 (GAKKGGRTRSKP). The segment covering 297 to 319 (ITKEEPTEEEVQKQVRETLEKLQ) has biased composition (basic and acidic residues). Residues 323–333 (SKGKGAKYRRQ) show a composition bias toward basic residues. A compositionally biased stretch (basic and acidic residues) spans 334–344 (KRDEHRQRSAD). Residues 434 to 602 (TRAPIVTVMG…KVLLEAEILE (169 aa)) enclose the tr-type G domain. Positions 443–450 (GHVDHGKT) are G1. 443-450 (GHVDHGKT) lines the GTP pocket. The interval 468-472 (GITQH) is G2. The G3 stretch occupies residues 490 to 493 (DTPG). GTP contacts are provided by residues 490 to 494 (DTPGH) and 544 to 547 (NKSD). The interval 544–547 (NKSD) is G4. The tract at residues 580-582 (SAK) is G5.

Belongs to the TRAFAC class translation factor GTPase superfamily. Classic translation factor GTPase family. IF-2 subfamily.

The protein resides in the cytoplasm. Functionally, one of the essential components for the initiation of protein synthesis. Protects formylmethionyl-tRNA from spontaneous hydrolysis and promotes its binding to the 30S ribosomal subunits. Also involved in the hydrolysis of GTP during the formation of the 70S ribosomal complex. This chain is Translation initiation factor IF-2, found in Christiangramia forsetii (strain DSM 17595 / CGMCC 1.15422 / KT0803) (Gramella forsetii).